Consider the following 183-residue polypeptide: Calmodulin-like protein 3 (183 aa).

EF-hand domains follow at residues 7–42, 43–78, 80–115, and 116–151; these read EQIA…LGQS, PTEA…KLRD, GAED…LSDP, and LSDD…KRRQ. The Ca(2+) site is built by aspartate 20, aspartate 22, aspartate 24, threonine 26, glutamate 31, aspartate 56, aspartate 58, serine 60, serine 62, glutamate 67, aspartate 93, aspartate 95, asparagine 97, glutamate 104, aspartate 129, aspartate 131, aspartate 133, glutamine 135, and glutamate 140. The tract at residues 154 to 183 is disordered; that stretch reads MEGHGSGGHRSSNSHKKSGCCGPNSSCTIL. S-palmitoyl cysteine attachment occurs at residues cysteine 173 and cysteine 174. Position 180 is a cysteine methyl ester (cysteine 180). Cysteine 180 carries the S-farnesyl cysteine lipid modification. The propeptide at 181–183 is removed in mature form; it reads TIL.

Belongs to the calmodulin family.

It localises to the membrane. Its function is as follows. Potential calcium sensor. This chain is Calmodulin-like protein 3 (CML3), found in Oryza sativa subsp. japonica (Rice).